A 184-amino-acid polypeptide reads, in one-letter code: MAGEHVILLDEQDQPAGMLEKYAAHTLDTPLHLAFSCWLFNQQGQFLVTRRSLGKKAWPGVWTNSVCGHPQQGETFEQAVTRRCRFELGVEIADIAPIHPAFRYRAVAPNGIVENEVCPVYAARVVSQVQPNDDEVMDYQWVDLETMLSALAATPWAFSPWMVLEAENQDARQALIDFVARLRG.

Mn(2+) is bound by residues His25 and His32. A Nudix hydrolase domain is found at 30-164; it reads PLHLAFSCWL…PWAFSPWMVL (135 aa). Cys67 is a catalytic residue. Residue His69 coordinates Mn(2+). Glu87 contacts Mg(2+). Mn(2+)-binding residues include Glu114 and Glu116. Residue Glu116 is part of the active site.

It belongs to the IPP isomerase type 1 family. As to quaternary structure, homodimer. Requires Mg(2+) as cofactor. It depends on Mn(2+) as a cofactor.

Its subcellular location is the cytoplasm. The catalysed reaction is isopentenyl diphosphate = dimethylallyl diphosphate. Its pathway is isoprenoid biosynthesis; dimethylallyl diphosphate biosynthesis; dimethylallyl diphosphate from isopentenyl diphosphate: step 1/1. In terms of biological role, catalyzes the 1,3-allylic rearrangement of the homoallylic substrate isopentenyl (IPP) to its highly electrophilic allylic isomer, dimethylallyl diphosphate (DMAPP). In Klebsiella pneumoniae (strain 342), this protein is Isopentenyl-diphosphate Delta-isomerase.